Consider the following 138-residue polypeptide: MLSPKKVKYRKKQRGRLSGEAQKGNKISFGEYGLVSLETSFITARQIEAARIAMTRKIKRGGRVWIRIFPDIPYTKKPAETRMGKGKGGVDHWNAPVKLGTVMFEMAGVIEELAQEAMSLASSKLPVKTMFVVRRDLR.

The segment covering 1–15 (MLSPKKVKYRKKQRG) has biased composition (basic residues). Residues 1-21 (MLSPKKVKYRKKQRGRLSGEA) are disordered.

It belongs to the universal ribosomal protein uL16 family. Part of the 50S ribosomal subunit.

In terms of biological role, binds 23S rRNA and is also seen to make contacts with the A and possibly P site tRNAs. This chain is Large ribosomal subunit protein uL16, found in Borrelia garinii subsp. bavariensis (strain ATCC BAA-2496 / DSM 23469 / PBi) (Borreliella bavariensis).